A 335-amino-acid chain; its full sequence is Glyceraldehyde-3-phosphate dehydrogenase 2 (335 aa).

NAD(+)-binding positions include 13 to 14 (RI), D34, and M79. Residues 151-153 (SCT), T182, 211-212 (TG), and R234 contribute to the D-glyceraldehyde 3-phosphate site. C152 acts as the Nucleophile in catalysis. An NAD(+)-binding site is contributed by N316.

It belongs to the glyceraldehyde-3-phosphate dehydrogenase family. In terms of assembly, homotetramer.

Its subcellular location is the cytoplasm. The catalysed reaction is D-glyceraldehyde 3-phosphate + phosphate + NAD(+) = (2R)-3-phospho-glyceroyl phosphate + NADH + H(+). It functions in the pathway carbohydrate degradation; glycolysis; pyruvate from D-glyceraldehyde 3-phosphate: step 1/5. Functionally, glyceraldehyde-3-phosphate dehydrogenase is a key enzyme in glycolysis that catalyzes the first step of the pathway by converting D-glyceraldehyde 3-phosphate (G3P) into 3-phospho-D-glyceroyl phosphate. This chain is Glyceraldehyde-3-phosphate dehydrogenase 2 (gapdh-2), found in Danio rerio (Zebrafish).